The following is a 1479-amino-acid chain: Putative receptor-type tyrosine-protein phosphatase mosPTP-1 (1479 aa).

An N-terminal signal peptide occupies residues 1 to 28 (MKPRLLTTVTTWLALVLPVVYLSRPCQA). Residues 29–365 (LPTVNFTANY…RQSYNDYNLA (337 aa)) are Extracellular-facing. N-linked (GlcNAc...) asparagine glycans are attached at residues asparagine 33, asparagine 40, asparagine 146, asparagine 182, asparagine 248, asparagine 294, and asparagine 306. 2 Fibronectin type-III domains span residues 143–242 (KPLN…AGPS) and 243–346 (APKV…VQLN). A helical membrane pass occupies residues 366–386 (VMIGILICCFGLLFIVLTILL). At 387-1479 (WKKCFHAAYY…AKLRAVVRVE (1093 aa)) the chain is on the cytoplasmic side. Tyrosine-protein phosphatase domains follow at residues 452-717 (FSKE…LVEA) and 740-992 (IDSQ…LSYM). Residue cysteine 658 is the Phosphocysteine intermediate of the active site.

This sequence belongs to the protein-tyrosine phosphatase family. Receptor class subfamily. Interacts with C-type lectin mosGCTL-1. Interacts with C-type lectin mosGCTL-7.

It localises to the cell membrane. It carries out the reaction O-phospho-L-tyrosyl-[protein] + H2O = L-tyrosyl-[protein] + phosphate. Its function is as follows. Putative protein tyrosine-protein phosphatase. (Microbial infection) Facilitates West Nile virus infection in mosquitoes. In Culex quinquefasciatus (Southern house mosquito), this protein is Putative receptor-type tyrosine-protein phosphatase mosPTP-1.